The chain runs to 151 residues: 3-hydroxyacyl-[acyl-carrier-protein] dehydratase FabZ (151 aa).

The active site involves His-49.

This sequence belongs to the thioester dehydratase family. FabZ subfamily.

Its subcellular location is the cytoplasm. It carries out the reaction a (3R)-hydroxyacyl-[ACP] = a (2E)-enoyl-[ACP] + H2O. Its function is as follows. Involved in unsaturated fatty acids biosynthesis. Catalyzes the dehydration of short chain beta-hydroxyacyl-ACPs and long chain saturated and unsaturated beta-hydroxyacyl-ACPs. The protein is 3-hydroxyacyl-[acyl-carrier-protein] dehydratase FabZ of Bordetella bronchiseptica (strain ATCC BAA-588 / NCTC 13252 / RB50) (Alcaligenes bronchisepticus).